Here is a 162-residue protein sequence, read N- to C-terminus: 18.5 kDa class IV heat shock protein (162 aa).

The region spanning 53-149 is the sHSP domain; the sequence is TSSSTVNTQL…PPQLPEIEEN (97 aa).

Belongs to the small heat shock protein (HSP20) family. As to quaternary structure, may form oligomeric structures.

It localises to the cytoplasm. This Arabidopsis thaliana (Mouse-ear cress) protein is 18.5 kDa class IV heat shock protein (HSP18.5).